A 179-amino-acid polypeptide reads, in one-letter code: UPF0303 protein P4H10.12 (179 aa).

It belongs to the UPF0303 family.

The chain is UPF0303 protein P4H10.12 from Schizosaccharomyces pombe (strain 972 / ATCC 24843) (Fission yeast).